A 232-amino-acid polypeptide reads, in one-letter code: Large ribosomal subunit protein uL1 (232 aa).

This sequence belongs to the universal ribosomal protein uL1 family. Part of the 50S ribosomal subunit.

Binds directly to 23S rRNA. The L1 stalk is quite mobile in the ribosome, and is involved in E site tRNA release. Its function is as follows. Protein L1 is also a translational repressor protein, it controls the translation of the L11 operon by binding to its mRNA. This chain is Large ribosomal subunit protein uL1, found in Burkholderia lata (strain ATCC 17760 / DSM 23089 / LMG 22485 / NCIMB 9086 / R18194 / 383).